We begin with the raw amino-acid sequence, 369 residues long: Spore membrane assembly protein 2 (369 aa).

Topologically, residues 1–6 (MLFPKR) are cytoplasmic. Residues 7-27 (LIVWGVLLILSLSQFVLYLPA) form a helical membrane-spanning segment. Topologically, residues 28–220 (TTCTNSKGLR…NLAFILMMFN (193 aa)) are lumenal. A helical membrane pass occupies residues 221-241 (GMVFYFAVLEIIVGFLSICVV). Residues 242-265 (SAFGGALSVGKRHRLFPILLKSSS) lie on the Cytoplasmic side of the membrane. The chain crosses the membrane as a helical span at residues 266 to 286 (SILVVIATLTILCNIVYLIAL). At 287 to 319 (KTLEPEEVTDVGSDNAAVHTTGWELLKVNVGSG) the chain is on the lumenal side. A helical transmembrane segment spans residues 320-340 (FIMGLARYAIQWVLLVLAFLA). The Cytoplasmic portion of the chain corresponds to 341 to 369 (ANHYKAKPKKSDKYTEDTSNSPSPDLMEK). The segment at 348 to 369 (PKKSDKYTEDTSNSPSPDLMEK) is disordered.

Belongs to the SMA2 family.

Its subcellular location is the prospore membrane. The protein resides in the endoplasmic reticulum. Its function is as follows. Involved in spore and ascus formation. Required for the efficient assembly of the precursors of the prospore membrane to a continuous prospore membrane. The sequence is that of Spore membrane assembly protein 2 (SMA2) from Saccharomyces cerevisiae (strain YJM789) (Baker's yeast).